We begin with the raw amino-acid sequence, 747 residues long: Probable alpha-galactosidase C (747 aa).

The first 24 residues, 1–24, serve as a signal peptide directing secretion; that stretch reads MVAFMNSATFVAGLFTLWSRPIWA. N-linked (GlcNAc...) asparagine glycosylation is found at asparagine 36, asparagine 182, asparagine 190, asparagine 362, asparagine 429, and asparagine 449. Aspartate 507 acts as the Nucleophile in catalysis. A glycan (N-linked (GlcNAc...) asparagine) is linked at asparagine 534. Aspartate 569 functions as the Proton donor in the catalytic mechanism.

It belongs to the glycosyl hydrolase 36 family. As to quaternary structure, homotetramer. Mg(2+) serves as cofactor. It depends on NAD(+) as a cofactor.

Its subcellular location is the secreted. The catalysed reaction is Hydrolysis of terminal, non-reducing alpha-D-galactose residues in alpha-D-galactosides, including galactose oligosaccharides, galactomannans and galactolipids.. In terms of biological role, hydrolyzes a variety of simple alpha-D-galactoside as well as more complex molecules such as oligosaccharides and polysaccharides. This is Probable alpha-galactosidase C (aglC) from Aspergillus terreus (strain NIH 2624 / FGSC A1156).